A 462-amino-acid chain; its full sequence is Protein Tube (462 aa).

The Death domain maps to 27–152; sequence YSRNTELRRV…SAADFVALDF (126 aa). Residues 218–265 form a disordered region; the sequence is RDKSVPQPSGNTPPIAPPRRQQRSTTNSNFATLTGTGTTSTTIPNVPN. Over residues 249-259 the composition is skewed to low complexity; it reads TLTGTGTTSTT. Tandem repeats lie at residues 262-269 and 286-293. The 5 X approximate repeats stretch occupies residues 262 to 460; the sequence is NVPNLTILNP…ACNIPDLSEL (199 aa). Polar residues predominate over residues 301–317; sequence RATVSDNPSNRTSSTDP. Residues 301 to 462 form a disordered region; sequence RATVSDNPSN…NIPDLSELQQ (162 aa). Residues 319 to 326 form repeat 3; the sequence is NIPRITLL. Positions 342-354 are enriched in low complexity; that stretch reads AKASTATTSTASS. Residues 355-367 show a composition bias toward polar residues; sequence NNLPMISALNISK. Repeat 4 spans residues 356-363; the sequence is NLPMISAL. Positions 368–377 are enriched in basic and acidic residues; the sequence is GSRETLRPES. The segment covering 387–403 has biased composition (acidic residues); sequence DDDDDNDGEEDGEEEYP. Positions 409–424 are enriched in low complexity; it reads NLSNSEQQSSNNDSSL. Over residues 425–438 the composition is skewed to polar residues; that stretch reads TTVTGTSGDNSFEL. A compositionally biased stretch (low complexity) spans 439–449; it reads TNDSSSTSNDD. The stretch at 453-460 is repeat 5; the sequence is NIPDLSEL.

Interacts (via Death domain) with pll (via Death domain). In terms of processing, phosphorylated by pll.

The protein resides in the cytoplasm. Its subcellular location is the cell membrane. Plays an essential role in the Tl receptor signaling pathway that establishes embryonic dorsoventral polarity; the signal directs import of dl into ventral and ventrolateral nuclei, thereby establishing dorsoventral polarity. Tub recruits pll to the plasma membrane and protein-protein interaction activates pll. Also has a role in pupal pattern formation. The sequence is that of Protein Tube (tub) from Drosophila melanogaster (Fruit fly).